Consider the following 243-residue polypeptide: 1-(5-phosphoribosyl)-5-[(5-phosphoribosylamino)methylideneamino] imidazole-4-carboxamide isomerase (243 aa).

D10 acts as the Proton acceptor in catalysis. D129 functions as the Proton donor in the catalytic mechanism.

The protein belongs to the HisA/HisF family.

The protein localises to the cytoplasm. The catalysed reaction is 1-(5-phospho-beta-D-ribosyl)-5-[(5-phospho-beta-D-ribosylamino)methylideneamino]imidazole-4-carboxamide = 5-[(5-phospho-1-deoxy-D-ribulos-1-ylimino)methylamino]-1-(5-phospho-beta-D-ribosyl)imidazole-4-carboxamide. The protein operates within amino-acid biosynthesis; L-histidine biosynthesis; L-histidine from 5-phospho-alpha-D-ribose 1-diphosphate: step 4/9. This is 1-(5-phosphoribosyl)-5-[(5-phosphoribosylamino)methylideneamino] imidazole-4-carboxamide isomerase from Nocardia farcinica (strain IFM 10152).